We begin with the raw amino-acid sequence, 695 residues long: D-(-)-3-hydroxybutyrate oligomer hydrolase (695 aa).

An N-terminal signal peptide occupies residues 1 to 17; sequence MTTHGWGTRILLGAALA. Ser308 serves as the catalytic Charge relay system.

Belongs to the D-(-)-3-hydroxybutyrate oligomer hydrolase family.

It localises to the secreted. The catalysed reaction is (3R)-hydroxybutanoate dimer + H2O = 2 (R)-3-hydroxybutanoate + H(+). The protein operates within lipid metabolism; butanoate metabolism. Its function is as follows. Participates in the degradation of poly-3-hydroxybutyrate (PHB). It works downstream of poly(3-hydroxybutyrate) depolymerase, hydrolyzing D(-)-3-hydroxybutyrate oligomers of various length (3HB-oligomers) into 3HB-monomers. This Burkholderia ambifaria (strain ATCC BAA-244 / DSM 16087 / CCUG 44356 / LMG 19182 / AMMD) (Burkholderia cepacia (strain AMMD)) protein is D-(-)-3-hydroxybutyrate oligomer hydrolase.